A 200-amino-acid chain; its full sequence is Protein GrpE (200 aa).

Over residues 1–11 (MSNQTNKAQDN) the composition is skewed to polar residues. Positions 1-25 (MSNQTNKAQDNQVEEIVEGELLNEN) are disordered.

Belongs to the GrpE family. In terms of assembly, homodimer.

The protein resides in the cytoplasm. In terms of biological role, participates actively in the response to hyperosmotic and heat shock by preventing the aggregation of stress-denatured proteins, in association with DnaK and GrpE. It is the nucleotide exchange factor for DnaK and may function as a thermosensor. Unfolded proteins bind initially to DnaJ; upon interaction with the DnaJ-bound protein, DnaK hydrolyzes its bound ATP, resulting in the formation of a stable complex. GrpE releases ADP from DnaK; ATP binding to DnaK triggers the release of the substrate protein, thus completing the reaction cycle. Several rounds of ATP-dependent interactions between DnaJ, DnaK and GrpE are required for fully efficient folding. The chain is Protein GrpE from Shewanella pealeana (strain ATCC 700345 / ANG-SQ1).